Reading from the N-terminus, the 785-residue chain is Conserved oligomeric Golgi complex subunit 4 (785 aa).

A disordered region spans residues 1–24; the sequence is MADLDSPPKLSGVQQPSEGVGGGR. Ala-2 carries the N-acetylalanine modification. The interaction with SCFD1 stretch occupies residues 2-84; sequence ADLDSPPKLS…VTLHRMGPNL (83 aa). Ser-6 carries the post-translational modification Phosphoserine. The segment at 85–153 is interaction with STX5; sequence QLIEGDAKQL…TALRSEDYEQ (69 aa). The d domain stretch occupies residues 618-740; it reads PQVQPWINSF…SQMATILNLE (123 aa). Residues 741-785 are e domain; essential for proper cell surface glycosylation; the sequence is RVTEILDYWGPNSGPLTWRLTPAEVRQVLALRIDFRSEDIKRLRL.

This sequence belongs to the COG4 family. As to quaternary structure, monomer. Component of the conserved oligomeric Golgi (COG) complex which is composed of eight different subunits and is required for normal Golgi morphology and localization. Mediates interaction of SCFD1 with the COG complex. Interacts with STX5.

Its subcellular location is the cytoplasm. It localises to the cytosol. The protein localises to the golgi apparatus membrane. Functionally, required for normal Golgi function. Plays a role in SNARE-pin assembly and Golgi-to-ER retrograde transport via its interaction with SCFD1. This is Conserved oligomeric Golgi complex subunit 4 (COG4) from Homo sapiens (Human).